The sequence spans 256 residues: 1-(5-phosphoribosyl)-5-[(5-phosphoribosylamino)methylideneamino] imidazole-4-carboxamide isomerase (256 aa).

The active-site Proton acceptor is the D8. D130 serves as the catalytic Proton donor.

It belongs to the HisA/HisF family.

The protein localises to the cytoplasm. It carries out the reaction 1-(5-phospho-beta-D-ribosyl)-5-[(5-phospho-beta-D-ribosylamino)methylideneamino]imidazole-4-carboxamide = 5-[(5-phospho-1-deoxy-D-ribulos-1-ylimino)methylamino]-1-(5-phospho-beta-D-ribosyl)imidazole-4-carboxamide. It functions in the pathway amino-acid biosynthesis; L-histidine biosynthesis; L-histidine from 5-phospho-alpha-D-ribose 1-diphosphate: step 4/9. This Chlorobium phaeobacteroides (strain DSM 266 / SMG 266 / 2430) protein is 1-(5-phosphoribosyl)-5-[(5-phosphoribosylamino)methylideneamino] imidazole-4-carboxamide isomerase.